The sequence spans 343 residues: tRNA N6-adenosine threonylcarbamoyltransferase (343 aa).

2 residues coordinate Fe cation: H116 and H120. Substrate contacts are provided by residues 138 to 142 (LVSGG), D171, G184, D188, and N277. D306 lines the Fe cation pocket.

Belongs to the KAE1 / TsaD family. Requires Fe(2+) as cofactor.

The protein resides in the cytoplasm. The enzyme catalyses L-threonylcarbamoyladenylate + adenosine(37) in tRNA = N(6)-L-threonylcarbamoyladenosine(37) in tRNA + AMP + H(+). Its function is as follows. Required for the formation of a threonylcarbamoyl group on adenosine at position 37 (t(6)A37) in tRNAs that read codons beginning with adenine. Is involved in the transfer of the threonylcarbamoyl moiety of threonylcarbamoyl-AMP (TC-AMP) to the N6 group of A37, together with TsaE and TsaB. TsaD likely plays a direct catalytic role in this reaction. The sequence is that of tRNA N6-adenosine threonylcarbamoyltransferase from Ligilactobacillus salivarius (strain UCC118) (Lactobacillus salivarius).